The following is a 678-amino-acid chain: AAC-rich mRNA clone AAC4 protein (678 aa).

The segment covering N55–N73 has biased composition (low complexity). The disordered stretch occupies residues N55–S75. A helical transmembrane segment spans residues I243–Y263. Positions N318–N346 are enriched in low complexity. Residues N318–Q347 are disordered.

It localises to the membrane. In Dictyostelium discoideum (Social amoeba), this protein is AAC-rich mRNA clone AAC4 protein (AAC4).